A 3535-amino-acid chain; its full sequence is Lysosomal-trafficking regulator (3535 aa).

The segment at 412-436 (MESSASTAMPKQQQHPRHKRQRSSQ) is disordered. A WD 1 repeat occupies 689-736 (TLSRRLIQLQLNSSDRASQLFQALLYKCSKHSRAKFWLDESSTPAKLE). A compositionally biased stretch (polar residues) spans 1066–1096 (STHQEPTGVVNSPSGDSQQPRPRARSFNSGS). 2 disordered regions span residues 1066 to 1132 (STHQ…NAGV) and 1592 to 1613 (GEGQ…TLDG). A compositionally biased stretch (low complexity) spans 1596-1610 (PTGRSPGSSSSSRST). Residues 2686–2784 (SLNSQILYNF…MREVFCDKIV (99 aa)) form the BEACH-type PH domain. Positions 2784–3081 (VATPDQSKVI…QLFKSPHPAS (298 aa)) constitute a BEACH domain. The disordered stretch occupies residues 3254 to 3287 (GIGGGGSERVDEAGNLHPTSSASSVNSSSISSGG). Low complexity predominate over residues 3273–3285 (SSASSVNSSSISS). 3 WD repeats span residues 3307–3346 (RHTD…YVRT), 3442–3486 (VHED…FVSE), and 3489–3527 (TGTS…GNAP).

As to quaternary structure, interacts with Rab5; the interaction is independent of GDP or GTP. Interacts with msps.

The protein localises to the vesicle. Its subcellular location is the cytoplasm. The protein resides in the cytoskeleton. It is found in the spindle. It localises to the spindle pole. Functionally, adapter protein that regulates intracellular membrane fusion reactions. Regulates the fusion of lysosome-related organelles. Promotes microtubules nucleation and centrosomal recruitment of microtubule nucleating proteins such as msps. In syncytial embryos, during the formation of yolk granules, suppresses vesicle fusion events with lipid droplets, possibly via interaction with Rab5. In the eye, regulates pigment granules size. In hemocytes, required for the late steps of bacteria phagocytosis. In fat body, required for autophagosome maturation. The chain is Lysosomal-trafficking regulator from Drosophila melanogaster (Fruit fly).